We begin with the raw amino-acid sequence, 454 residues long: Phenylalanine--tRNA ligase, mitochondrial (454 aa).

Substrate-binding positions include 141 to 144 (SAHQ), arginine 163, 170 to 172 (VHY), 177 to 179 (QME), glutamate 266, and phenylalanine 291. A disordered region spans residues 327 to 347 (KSISTSSSSSSSSSSSSSSTL). Low complexity predominate over residues 328–347 (SISTSSSSSSSSSSSSSSTL). The region spanning 361-454 (SKYPSCFKDV…LENHLSVKLR (94 aa)) is the FDX-ACB domain.

Belongs to the class-II aminoacyl-tRNA synthetase family. As to quaternary structure, monomer.

Its subcellular location is the mitochondrion matrix. The enzyme catalyses tRNA(Phe) + L-phenylalanine + ATP = L-phenylalanyl-tRNA(Phe) + AMP + diphosphate + H(+). Its function is as follows. Is responsible for the charging of tRNA(Phe) with phenylalanine in mitochondrial translation. The polypeptide is Phenylalanine--tRNA ligase, mitochondrial (mpheS) (Dictyostelium discoideum (Social amoeba)).